Here is a 289-residue protein sequence, read N- to C-terminus: Geranylgeranyl diphosphate synthase (289 aa).

The isopentenyl diphosphate site is built by Arg43 and His73. Residues Asp80 and Asp86 each contribute to the Mg(2+) site. Residue Arg91 participates in (2E,6E)-farnesyl diphosphate binding. Arg92 provides a ligand contact to isopentenyl diphosphate. (2E,6E)-farnesyl diphosphate-binding residues include Lys170, Thr171, and Gln205.

It belongs to the FPP/GGPP synthase family. The cofactor is Mg(2+).

The enzyme catalyses isopentenyl diphosphate + (2E,6E)-farnesyl diphosphate = (2E,6E,10E)-geranylgeranyl diphosphate + diphosphate. Its pathway is isoprenoid biosynthesis; geranylgeranyl diphosphate biosynthesis; geranylgeranyl diphosphate from farnesyl diphosphate and isopentenyl diphosphate: step 1/1. Functionally, catalyzes the condensation of farnesyl diphosphate (FPP) and isopentenyl diphosphate (IPP) to yield geranylgeranyl diphosphate (GGPP) needed for biosynthesis of carotenoids and diterpenes. The protein is Geranylgeranyl diphosphate synthase (crtE) of Rhodobacter capsulatus (strain ATCC BAA-309 / NBRC 16581 / SB1003).